A 578-amino-acid polypeptide reads, in one-letter code: Arginine--tRNA ligase (578 aa).

A 'HIGH' region motif is present at residues 127-137 (PNLAKEMHVGH).

It belongs to the class-I aminoacyl-tRNA synthetase family. In terms of assembly, monomer.

Its subcellular location is the cytoplasm. It carries out the reaction tRNA(Arg) + L-arginine + ATP = L-arginyl-tRNA(Arg) + AMP + diphosphate. This is Arginine--tRNA ligase from Pseudomonas putida (strain GB-1).